The sequence spans 361 residues: G-protein coupled receptor 52 (361 aa).

Residues 1-44 are Extracellular-facing; sequence MNESRWTEWRILNMSSSIVNVSEHHSCPLGFGHYSVEDVCIFET. N2, N13, and N20 each carry an N-linked (GlcNAc...) asparagine glycan. Residues 45-65 form a helical membrane-spanning segment; sequence VVIVLLTFLIISGNLTVIFVF. The Cytoplasmic portion of the chain corresponds to 66-81; sequence HCAPLLHHYTTSYFIQ. A helical transmembrane segment spans residues 82–102; sequence TMAYADLLVGVTCLVPTLSLL. At 103–115 the chain is on the extracellular side; sequence HYSTGVHESLTCQ. An intrachain disulfide couples C114 to C193. A helical transmembrane segment spans residues 116–136; it reads VFGYIISVLKSVSMACLACIS. Residues 137–159 lie on the Cytoplasmic side of the membrane; that stretch reads VDRYLAITKPLSYNQLVTPCRLR. The chain crosses the membrane as a helical span at residues 160-180; sequence ICIIMIWIYSCLIFLPSFFGW. The Extracellular segment spans residues 181–205; the sequence is GKPGYHGDIFEWCATSWLTSAYFTC. The chain crosses the membrane as a helical span at residues 206 to 226; that stretch reads FIVCLLYAPAALVVCFTYFHI. Residues 227–265 lie on the Cytoplasmic side of the membrane; that stretch reads FKICRQHTKEINDRRARFPSHEVEASREAGHSPDRRYAM. Residues 266-286 form a helical membrane-spanning segment; sequence VLFRITSVFYMLWLPYIIYFL. Topologically, residues 287-296 are extracellular; sequence LESSRVLDNP. A helical membrane pass occupies residues 297 to 317; sequence TLSFLTTWLAISNSFCNCVIY. Topologically, residues 318–361 are cytoplasmic; the sequence is SLSNSVFRLGLRRLSETMCTSCVCAKDQEAQDPKPRRRANSCSI.

The protein belongs to the G-protein coupled receptor 1 family. In terms of tissue distribution, expressed in brain, especially in striatum. Expressed in the striatum, nucleus accumbens, and lateral globus pallidus.

It is found in the cell membrane. Its function is as follows. G- protein coupled receptor activated by antipsychotics reserpine leading to an increase in intracellular cAMP and its internalization. May play a role in locomotor activity through modulation of dopamine, NMDA and ADORA2A-induced locomotor activity. These behavioral changes are accompanied by modulation of the dopamine receptor signaling pathway in striatum. Modulates HTT level via cAMP-dependent but PKA independent mechanisms throught activation of RAB39B that translocates HTT to the endoplasmic reticulum, thus avoiding proteasome degradation. The chain is G-protein coupled receptor 52 from Mus musculus (Mouse).